Consider the following 115-residue polypeptide: MKFLKKQARLRRATKFRAKHAKKDIERLCIHKTAQHIYAQIISSCGTKILASASTLKAKLKNGGNVDAAVKVGEAIAKAATSVKVKKVAFDRSGFKYHGRVKALADAAREGGLDF.

The protein belongs to the universal ribosomal protein uL18 family. In terms of assembly, part of the 50S ribosomal subunit; part of the 5S rRNA/L5/L18/L25 subcomplex. Contacts the 5S and 23S rRNAs.

Functionally, this is one of the proteins that bind and probably mediate the attachment of the 5S RNA into the large ribosomal subunit, where it forms part of the central protuberance. This is Large ribosomal subunit protein uL18 from Vesicomyosocius okutanii subsp. Calyptogena okutanii (strain HA).